A 528-amino-acid chain; its full sequence is MNKKWLNIPALIALLAAIAFGSVAPAEAAPATSVSNKQNFSTDVIYQIVTDRFVDGNTANNPAGSAYDATCSTNLKLYCGGDWQGIMNKINDGYFTGMGITALWISQPVENIYSVINYSGVNNTAYHGYWARDFKKTNPAFGSMTDFANLISAAHSRNIKVVIDFAPNHTSPAMETNASFGENGKLYDNGTLLGGYTGDTNGYFHHNGGTDFSTLKNGIYKNLYDLADLNHNNSTIDTYFKNAIRLWLDMGIDGIRVDAVKHMPFGWQKNWMSSIYSYKPVFTFGEWFLGTNETDANNTYFANESGMSLLDFRFSQKVRQVFRDGSDTMYGLDSMLSSTAADYYSVNDQVTFLDNHDMDRFQVSGANGRKLEQALALTLTSRGVPAIYYGTEQYMTGNGDPNNRAKMSSFSTSTTAYNVISKLAPLRKSNPAIAYGTTQQRWINNDVYIYERKFGNNVAVVAINKNLTSSYSIAGLNTSLPSGTYTDVLANSLSGNSITVGSSGAVNTFTLQAGGEASGLTRRRQRLR.

The first 28 residues, 1–28 (MNKKWLNIPALIALLAAIAFGSVAPAEA), serve as a signal peptide directing secretion. 2 residues coordinate Ca(2+): Asn-168 and Asp-228. Asp-258 acts as the Nucleophile in catalysis. His-262 contacts Ca(2+). Catalysis depends on Glu-286, which acts as the Proton donor.

Belongs to the glycosyl hydrolase 13 family. Monomer. Ca(2+) is required as a cofactor.

The enzyme catalyses Endohydrolysis of (1-&gt;4)-alpha-D-glucosidic linkages in polysaccharides containing three or more (1-&gt;4)-alpha-linked D-glucose units.. The polypeptide is Alpha-amylase (Niallia circulans (Bacillus circulans)).